The chain runs to 194 residues: CASP-like protein 4C1 (194 aa).

At 1–35 the chain is on the cytoplasmic side; sequence MRSPHAFRNGESPTLRDHTHFHSTVTAQKLRRFNS. The helical transmembrane segment at 36–56 threads the bilayer; it reads LILLLRLASFSFSLASAVFML. The Extracellular segment spans residues 57–74; the sequence is TNSRGSASPHWYDFDAFR. Residues 75 to 95 form a helical membrane-spanning segment; the sequence is FVFVANAIVALYSVFEMGTCV. Residues 96 to 114 lie on the Cytoplasmic side of the membrane; the sequence is WEFSRETTLWPEAFQVWFD. Residues 115–135 traverse the membrane as a helical segment; the sequence is FGHDQVFSYLLLSAGSAAAAL. Residues 136–157 are Extracellular-facing; that stretch reads ARTMRGGDTCTANKAFCLQSDV. The helical transmembrane segment at 158–178 threads the bilayer; sequence AIGLGFAAFLFLAFSSCFSGF. Residues 179–194 are Cytoplasmic-facing; it reads RVACFLITGSRFHLYS.

Belongs to the Casparian strip membrane proteins (CASP) family. As to quaternary structure, homodimer and heterodimers.

The protein localises to the cell membrane. The protein is CASP-like protein 4C1 of Arabidopsis thaliana (Mouse-ear cress).